Reading from the N-terminus, the 634-residue chain is Factor of DNA methylation 5 (634 aa).

A coiled-coil region spans residues 254-469 (IVVDDLANKI…EDTNSALMVK (216 aa)).

In terms of biological role, acts in association with FDM3 and FDM4 for RNA-directed DNA methylation (RdDM). This chain is Factor of DNA methylation 5, found in Arabidopsis thaliana (Mouse-ear cress).